A 325-amino-acid polypeptide reads, in one-letter code: 33 kDa chaperonin (325 aa).

2 cysteine pairs are disulfide-bonded: cysteine 260/cysteine 262 and cysteine 293/cysteine 296.

This sequence belongs to the HSP33 family. In terms of processing, under oxidizing conditions two disulfide bonds are formed involving the reactive cysteines. Under reducing conditions zinc is bound to the reactive cysteines and the protein is inactive.

It localises to the cytoplasm. Its function is as follows. Redox regulated molecular chaperone. Protects both thermally unfolding and oxidatively damaged proteins from irreversible aggregation. Plays an important role in the bacterial defense system toward oxidative stress. The chain is 33 kDa chaperonin from Aquifex aeolicus (strain VF5).